A 148-amino-acid chain; its full sequence is Probable glycine cleavage system H protein 2 (148 aa).

The Lipoyl-binding domain occupies 32 to 114; the sequence is VIVVGITDIA…YGKGWLVKMK (83 aa). Lys73 carries the post-translational modification N6-lipoyllysine.

It belongs to the GcvH family. In terms of assembly, the glycine cleavage system is composed of four proteins: P, T, L and H. (R)-lipoate is required as a cofactor.

In terms of biological role, the glycine cleavage system catalyzes the degradation of glycine. The H protein shuttles the methylamine group of glycine from the P protein to the T protein. The protein is Probable glycine cleavage system H protein 2 of Sulfurisphaera tokodaii (strain DSM 16993 / JCM 10545 / NBRC 100140 / 7) (Sulfolobus tokodaii).